The following is a 356-amino-acid chain: Fructose-1,6-bisphosphatase class 1 1 (356 aa).

Glutamate 106, aspartate 129, leucine 131, and aspartate 132 together coordinate Mg(2+). Residues 132–135, asparagine 225, tyrosine 258, and lysine 288 each bind substrate; that span reads DGSS. Position 294 (glutamate 294) interacts with Mg(2+).

The protein belongs to the FBPase class 1 family. Homotetramer. Mg(2+) is required as a cofactor.

The protein resides in the cytoplasm. It carries out the reaction beta-D-fructose 1,6-bisphosphate + H2O = beta-D-fructose 6-phosphate + phosphate. It participates in carbohydrate biosynthesis; gluconeogenesis. The protein is Fructose-1,6-bisphosphatase class 1 1 of Salinibacter ruber (strain DSM 13855 / M31).